Consider the following 432-residue polypeptide: Chorismate synthase aro-2 (432 aa).

Residues histidine 17, histidine 106, and aspartate 367 contribute to the active site. The segment at 406-432 (LKQTINSGKDTVGNGVSENVQESDLAQ) is disordered. Residues 408 to 432 (QTINSGKDTVGNGVSENVQESDLAQ) show a composition bias toward polar residues.

Belongs to the chorismate synthase family. In terms of assembly, homotetramer.

The enzyme catalyses 5-O-(1-carboxyvinyl)-3-phosphoshikimate = chorismate + phosphate. It carries out the reaction FMNH2 + NADP(+) = FMN + NADPH + 2 H(+). The protein operates within metabolic intermediate biosynthesis; chorismate biosynthesis; chorismate from D-erythrose 4-phosphate and phosphoenolpyruvate: step 7/7. Bifunctional chorismate synthase and flavin reductase that catalyzes the conversion of 5-enolpyruvylshikimate 3-phosphate (EPSP) to form chorismate, which is the last common intermediate in the synthesis of the three aromatic amino acids phenylalanine, tyrosine and tryptophan. Acts also as a flavin reductase (FR) able to generate reduced flavin mononucleotide in the presence of NADPH. The polypeptide is Chorismate synthase aro-2 (Neurospora crassa (strain ATCC 24698 / 74-OR23-1A / CBS 708.71 / DSM 1257 / FGSC 987)).